The sequence spans 456 residues: MALWGGRFSQESSALFKLFNDSLPVDYRLVEQDIVGSIAWAAAITQVGILSQDECEKLQQALKELLSEVEGNPELILASGAEDIHSFVEQSLIAKVGDLGKKLHTGRSRNDQVATDLKLWCKKEGQQQLVLLAKLREALLALAERELDAVMPGYTHLQRAQPVAFGHWCLAYVEMFERDISRLEDALKRADTCPLGTGALAGTAYPMDRYKLAESLGFASPTLNSLDTVSDRDHVVEICSDASISMMHLSRMAEDLIFFNSGEAGFIDLDDEVTSGSSLMPQKKNPDALELIRGKTGRVYGSLIGILTTMKALPLAYNKDMQEDKEGLFDVMDSWSICLEMAALVLSGLKVNRENTLKAAQQGYANSTELADYLVAKGMPFREAHHVVGEVVVHAISEQKPLEDFALEQLQSFASIIEQDVYDCLTIESCLAKREALGGTALPQVQSALAAKKVKK.

Belongs to the lyase 1 family. Argininosuccinate lyase subfamily.

Its subcellular location is the cytoplasm. The catalysed reaction is 2-(N(omega)-L-arginino)succinate = fumarate + L-arginine. Its pathway is amino-acid biosynthesis; L-arginine biosynthesis; L-arginine from L-ornithine and carbamoyl phosphate: step 3/3. This Shewanella woodyi (strain ATCC 51908 / MS32) protein is Argininosuccinate lyase.